We begin with the raw amino-acid sequence, 155 residues long: MSRRGTAEEKTAKSDPIYRNRLVNMLVNRILKHGKKSLAYQIIYRALKKIQQKTETNPLCVLRQAIRGVTPDIAVKARRVGGSTHQVPIEIGSTQGKALAIRWLLGASRKRPGRNMAFKLSSELVDAAKGSGDAIRKKEETHRMAEANRAFAHFR.

It belongs to the universal ribosomal protein uS7 family. Part of the 30S ribosomal subunit.

The protein resides in the plastid. It is found in the chloroplast. In terms of biological role, one of the primary rRNA binding proteins, it binds directly to 16S rRNA where it nucleates assembly of the head domain of the 30S subunit. The polypeptide is Small ribosomal subunit protein uS7cz/uS7cy (rps7-A) (Nandina domestica (Heavenly bamboo)).